A 406-amino-acid chain; its full sequence is Phosphopentomutase (406 aa).

Residues D10, D305, H310, D346, H347, and H358 each coordinate Mn(2+).

Belongs to the phosphopentomutase family. It depends on Mn(2+) as a cofactor.

It localises to the cytoplasm. It carries out the reaction 2-deoxy-alpha-D-ribose 1-phosphate = 2-deoxy-D-ribose 5-phosphate. The catalysed reaction is alpha-D-ribose 1-phosphate = D-ribose 5-phosphate. The protein operates within carbohydrate degradation; 2-deoxy-D-ribose 1-phosphate degradation; D-glyceraldehyde 3-phosphate and acetaldehyde from 2-deoxy-alpha-D-ribose 1-phosphate: step 1/2. In terms of biological role, isomerase that catalyzes the conversion of deoxy-ribose 1-phosphate (dRib-1-P) and ribose 1-phosphate (Rib-1-P) to deoxy-ribose 5-phosphate (dRib-5-P) and ribose 5-phosphate (Rib-5-P), respectively. This is Phosphopentomutase from Vibrio vulnificus (strain CMCP6).